A 111-amino-acid chain; its full sequence is Transcription factor S (111 aa).

The Zn(2+) site is built by cysteine 4, cysteine 7, cysteine 24, cysteine 27, cysteine 72, cysteine 75, cysteine 100, and cysteine 103. The segment at 4–27 (CPKCGSMMMPRKENGKTVYKCSKC) adopts a C4-type zinc-finger fold. Residues 68–108 (RGISCPSCGNDEAYFWILQTRSADEPATRFYKCTKCGKVWR) form a TFIIS-type zinc finger.

This sequence belongs to the archaeal RpoM/eukaryotic RPA12/RPB9/RPC11 RNA polymerase family.

In terms of biological role, induces RNA cleavage activity in the RNA polymerase. In its presence, the cleavage activity of the RNA polymerase truncates the RNA back to position +15 in a stepwise manner by releasing mainly dinucleotides from the 3'-end of the nascent RNA. The truncated RNAs are able to continue elongation. Involved in transcriptional proofreading and fidelity. Misincorporation of nucleotides during elongation of transcription leads to arrested elongation complexes which are rescued by TFS-promoted removal of a dinucleotide from the 3'-end. TFS is able to induce a cleavage resynthesis cycle in stalled elongation complexes (resulting from the next missing nucleotide or a reduced incorporation rate of a wrong nucleotide) preventing misincorporation and enabling proofreading in a post-incorporation manner. Pausing of elongation complexes is the main determinant of TFS-induced RNA cleavage. In Sulfolobus acidocaldarius (strain ATCC 33909 / DSM 639 / JCM 8929 / NBRC 15157 / NCIMB 11770), this protein is Transcription factor S.